The sequence spans 313 residues: Protein FixB (313 aa).

FAD is bound at residue 255–283; it reads LYLAVGISGQIQHMVGANASQTIFAINKD.

The protein belongs to the ETF alpha-subunit/FixB family. As to quaternary structure, heterodimer of FixA and FixB.

It participates in amine and polyamine metabolism; carnitine metabolism. Functionally, required for anaerobic carnitine reduction. May bring reductant to CaiA. In Escherichia coli (strain K12 / MC4100 / BW2952), this protein is Protein FixB.